The primary structure comprises 238 residues: Riboflavin-binding protein (238 aa).

A signal peptide spans 1-17; the sequence is MLRFAITLFAVITSSTC. Residue Gln18 is modified to Pyrrolidone carboxylic acid. 9 disulfide bridges follow: Cys22–Cys49, Cys41–Cys90, Cys50–Cys94, Cys74–Cys155, Cys81–Cys127, Cys116–Cys186, Cys120–Cys169, Cys133–Cys151, and Cys184–Cys219. Asn53 is a glycosylation site (N-linked (GlcNAc...) asparagine). N-linked (GlcNAc...) asparagine glycosylation is present at Asn164. A phosphoserine mark is found at Ser204, Ser205, Ser208, Ser209, Ser210, Ser212, Ser213, and Ser214.

This sequence belongs to the folate receptor family. In terms of processing, plasma and yolk RBPS have the same carbohydrate components, whereas egg-white RBP has a different, ovomucoid-type carbohydrate chain. Plasma RBP has the same C-terminal sequence as the egg-white RBP, which suggests that the C-terminal residues are cleaved off upon incorporation into the oocyte. In terms of tissue distribution, yolk RBP is synthesized in the liver; egg-white RBP is synthesized in the oviduct.

Required for the transport of riboflavin to the developing oocyte. The polypeptide is Riboflavin-binding protein (Gallus gallus (Chicken)).